Reading from the N-terminus, the 417-residue chain is Tyrosine--tRNA ligase (417 aa).

Position 39 (Tyr39) interacts with L-tyrosine. The short motif at 44–53 (PTASSLHAGS) is the 'HIGH' region element. Residues Tyr176 and Gln180 each contribute to the L-tyrosine site. Residues 236–240 (KMGKS) carry the 'KMSKS' region motif. Lys239 provides a ligand contact to ATP. The region spanning 350–417 (AGLLALLVQA…KKKHVLIKPL (68 aa)) is the S4 RNA-binding domain.

The protein belongs to the class-I aminoacyl-tRNA synthetase family. TyrS type 1 subfamily. In terms of assembly, homodimer.

The protein localises to the cytoplasm. The enzyme catalyses tRNA(Tyr) + L-tyrosine + ATP = L-tyrosyl-tRNA(Tyr) + AMP + diphosphate + H(+). Functionally, catalyzes the attachment of tyrosine to tRNA(Tyr) in a two-step reaction: tyrosine is first activated by ATP to form Tyr-AMP and then transferred to the acceptor end of tRNA(Tyr). The sequence is that of Tyrosine--tRNA ligase from Bartonella quintana (strain Toulouse) (Rochalimaea quintana).